Consider the following 1014-residue polypeptide: Ephrin type-B receptor 6 (1014 aa).

An N-terminal signal peptide occupies residues Met-1 to Ala-32. The Extracellular segment spans residues Leu-33–Gly-591. Positions Glu-34 to Arg-232 constitute an Eph LBD domain. Fibronectin type-III domains lie at Pro-364–Glu-479 and Val-480–Gln-575. An N-linked (GlcNAc...) asparagine glycan is attached at Asn-473. A helical membrane pass occupies residues Ser-592 to Phe-612. The Cytoplasmic segment spans residues Gln-613–Val-1014. Residues Ile-663–Ile-912 enclose the Protein kinase domain. Ile-669 to Val-677 serves as a coordination point for ATP. The SAM domain maps to Pro-941–His-1005. Residues Val-1012–Val-1014 carry the PDZ-binding motif.

Belongs to the protein kinase superfamily. Tyr protein kinase family. Ephrin receptor subfamily. In terms of assembly, interacts with CBL and EPHB1. Interacts with FYN; this interaction takes place in a ligand-independent manner. Ligand-binding increases phosphorylation on tyrosine residues. Phosphorylation on tyrosine residues is mediated by transphosphorylation by the catalytically active EPHB1 in a ligand-independent manner. Tyrosine phosphorylation of the receptor may act as a switch on the functional transition from cell adhesion/attraction to de-adhesion/repulsion. In terms of tissue distribution, high level in thymus, and brain. Very low levels of expression in kidney, lung, liver, bone marrow, skeletal muscle, spleen from 2 week old and adult mice, heart, testes and embryonic stem cells.

It localises to the cell membrane. The protein resides in the secreted. Its function is as follows. Kinase-defective receptor for members of the ephrin-B family. Binds to ephrin-B1 and ephrin-B2. Modulates cell adhesion and migration by exerting both positive and negative effects upon stimulation with ephrin-B2. Inhibits JNK activation, T-cell receptor-induced IL-2 secretion and CD25 expression upon stimulation with ephrin-B2. The chain is Ephrin type-B receptor 6 (Ephb6) from Mus musculus (Mouse).